Here is a 201-residue protein sequence, read N- to C-terminus: Recombination protein RecR (201 aa).

The C4-type zinc finger occupies 57–74; that stretch reads CSICGNITATDTDPCVIC. In terms of domain architecture, Toprim spans 82–178; the sequence is STVFVVENSR…AVTRLAHGLA (97 aa).

The protein belongs to the RecR family.

In terms of biological role, may play a role in DNA repair. It seems to be involved in an RecBC-independent recombinational process of DNA repair. It may act with RecF and RecO. This chain is Recombination protein RecR, found in Leuconostoc mesenteroides subsp. mesenteroides (strain ATCC 8293 / DSM 20343 / BCRC 11652 / CCM 1803 / JCM 6124 / NCDO 523 / NBRC 100496 / NCIMB 8023 / NCTC 12954 / NRRL B-1118 / 37Y).